Consider the following 526-residue polypeptide: Peptide chain release factor 3 (526 aa).

The tr-type G domain occupies 9–277; the sequence is DKRRTFAIIS…GIVEWAPKPQ (269 aa). Residues 18–25, 86–90, and 140–143 each bind GTP; these read SHPDAGKT, DTPGH, and NKLD.

The protein belongs to the TRAFAC class translation factor GTPase superfamily. Classic translation factor GTPase family. PrfC subfamily.

It localises to the cytoplasm. Functionally, increases the formation of ribosomal termination complexes and stimulates activities of RF-1 and RF-2. It binds guanine nucleotides and has strong preference for UGA stop codons. It may interact directly with the ribosome. The stimulation of RF-1 and RF-2 is significantly reduced by GTP and GDP, but not by GMP. This Shewanella woodyi (strain ATCC 51908 / MS32) protein is Peptide chain release factor 3.